We begin with the raw amino-acid sequence, 276 residues long: Undecaprenyl-diphosphatase 1 (276 aa).

Transmembrane regions (helical) follow at residues 1 to 21 (MSLW…LFPV), 44 to 64 (QLLP…LWYF), 87 to 107 (GHLM…GLLL), 114 to 134 (VFHD…LLWL), 150 to 170 (LTFK…IPGF), 190 to 210 (AAEF…LLEL), 222 to 242 (DALL…RFLM), and 251 to 271 (LASF…WFMF).

The protein belongs to the UppP family.

The protein localises to the cell inner membrane. It carries out the reaction di-trans,octa-cis-undecaprenyl diphosphate + H2O = di-trans,octa-cis-undecaprenyl phosphate + phosphate + H(+). Functionally, catalyzes the dephosphorylation of undecaprenyl diphosphate (UPP). Confers resistance to bacitracin. The chain is Undecaprenyl-diphosphatase 1 from Burkholderia pseudomallei (strain 1106a).